The sequence spans 530 residues: Histone-arginine methyltransferase CARMER (530 aa).

The 310-residue stretch at 141–450 folds into the SAM-dependent MTase PRMT-type domain; the sequence is ASQYFQFYGY…QSYDVTIDLH (310 aa). Positions 154, 163, 187, 209, 238, and 266 each coordinate S-adenosyl-L-methionine. Arg501 carries the asymmetric dimethylarginine; by autocatalysis modification.

It belongs to the class I-like SAM-binding methyltransferase superfamily. Protein arginine N-methyltransferase family. Homodimer. In terms of processing, the dimethylated protein is the major form.

The protein localises to the cytoplasm. It localises to the nucleus. The catalysed reaction is L-arginyl-[protein] + 2 S-adenosyl-L-methionine = N(omega),N(omega)-dimethyl-L-arginyl-[protein] + 2 S-adenosyl-L-homocysteine + 2 H(+). In terms of biological role, methylates (mono- and asymmetric dimethylation) the guanidino nitrogens of arginyl residues in proteins. May methylate histone H3 at 'Arg-17' and activate transcription via chromatin remodeling. The chain is Histone-arginine methyltransferase CARMER (Art4) from Drosophila erecta (Fruit fly).